The primary structure comprises 387 residues: Alpha-maltose-1-phosphate synthase (387 aa).

This sequence belongs to the glycosyltransferase group 1 family.

It catalyses the reaction ADP-alpha-D-glucose + alpha-D-glucose 1-phosphate = alpha-maltose 1-phosphate + ADP + H(+). The protein operates within glycan biosynthesis; glycogen biosynthesis. Its function is as follows. Involved in the biosynthesis of the maltose-1-phosphate (M1P) building block required for alpha-glucan production by the key enzyme GlgE. Catalyzes the formation of an alpha-1,4 linkage between glucose from ADP-glucose and glucose 1-phosphate (G1P) to yield maltose-1-phosphate (M1P). The polypeptide is Alpha-maltose-1-phosphate synthase (Mycolicibacterium smegmatis (strain ATCC 700084 / mc(2)155) (Mycobacterium smegmatis)).